Here is an 855-residue protein sequence, read N- to C-terminus: Protein KRI1 homolog (855 aa).

Disordered stretches follow at residues 47 to 67 (VSES…VDPK), 82 to 117 (KDPC…KAKP), 130 to 196 (EHNG…KTKE), 312 to 342 (SLRR…MKEL), 424 to 453 (YDPR…CDYD), and 589 to 855 (KSLY…KKDN). Positions 48–64 (SESEFDSDSSSSEEDEV) are enriched in acidic residues. Basic and acidic residues predominate over residues 82 to 91 (KDPCIYDKGT). A phosphoserine mark is found at S95, S97, S98, S137, and S138. Residues 160–176 (EEERRLKAEFRKVMNKE) are compositionally biased toward basic and acidic residues. S179 is subject to Phosphoserine. A coiled-coil region spans residues 307-362 (RTIEQSLRRTDDKRKEKRKELKERKDQEKQQKMKELELVKEMKRKEIDEKIRKLKA). Over residues 441 to 452 (CEDDDFNMDCDY) the composition is skewed to acidic residues. Residues 609–619 (VTPAEATAPAE) are compositionally biased toward low complexity. The span at 630 to 640 (KSKRKRLKRKA) shows a compositional bias: basic residues. Composition is skewed to basic and acidic residues over residues 650-664 (VLKE…KEAD) and 674-692 (SSKK…DANQ). 3 stretches are compositionally biased toward polar residues: residues 720-748 (VQNG…TTES), 756-773 (SNGN…QQRQ), and 792-805 (ANGT…NQKP). Positions 812 to 826 (KKTNNFKAKNKQNNN) are enriched in low complexity. Basic residues predominate over residues 842–855 (RKFHKREKYGKKDN).

This sequence belongs to the KRI1 family.

The chain is Protein KRI1 homolog from Drosophila melanogaster (Fruit fly).